The chain runs to 246 residues: Probable transcriptional regulatory protein NT01CX_1819 (246 aa).

The protein belongs to the TACO1 family.

It localises to the cytoplasm. The protein is Probable transcriptional regulatory protein NT01CX_1819 of Clostridium novyi (strain NT).